Here is a 217-residue protein sequence, read N- to C-terminus: Elongation factor Ts (217 aa).

Residues 82 to 85 form an involved in Mg(2+) ion dislocation from EF-Tu region; the sequence is TDFV.

The protein belongs to the EF-Ts family.

It localises to the cytoplasm. Functionally, associates with the EF-Tu.GDP complex and induces the exchange of GDP to GTP. It remains bound to the aminoacyl-tRNA.EF-Tu.GTP complex up to the GTP hydrolysis stage on the ribosome. The polypeptide is Elongation factor Ts (Desulforamulus reducens (strain ATCC BAA-1160 / DSM 100696 / MI-1) (Desulfotomaculum reducens)).